The following is a 623-amino-acid chain: V-type proton ATPase catalytic subunit A (623 aa).

252-259 provides a ligand contact to ATP; sequence GAFGCGKT.

The protein belongs to the ATPase alpha/beta chains family. In terms of assembly, V-ATPase is a heteromultimeric enzyme composed of a peripheral catalytic V1 complex (main components: subunits A, B, C, D, E, and F) attached to an integral membrane V0 proton pore complex (main component: the proteolipid protein).

It carries out the reaction ATP + H2O + 4 H(+)(in) = ADP + phosphate + 5 H(+)(out). In terms of biological role, catalytic subunit of the peripheral V1 complex of vacuolar ATPase. V-ATPase vacuolar ATPase is responsible for acidifying a variety of intracellular compartments in eukaryotic cells. This chain is V-type proton ATPase catalytic subunit A, found in Vigna radiata var. radiata (Mung bean).